The following is a 118-amino-acid chain: Putative membrane protein insertion efficiency factor (118 aa).

The protein belongs to the UPF0161 family.

The protein resides in the cell inner membrane. Functionally, could be involved in insertion of integral membrane proteins into the membrane. This is Putative membrane protein insertion efficiency factor from Helicobacter pylori (strain HPAG1).